The chain runs to 491 residues: Nicotinamide phosphoribosyltransferase (491 aa).

N-acetylmethionine is present on methionine 1. Phosphotyrosine is present on tyrosine 188. Arginine 196 lines the diphosphate pocket. Aspartate 219 is a binding site for beta-nicotinamide D-ribonucleotide. Diphosphate is bound by residues histidine 247 and arginine 311. Beta-nicotinamide D-ribonucleotide contacts are provided by residues 311 to 313 (RPD), 353 to 354 (GD), glycine 384, and arginine 392. At serine 472 the chain carries Phosphoserine.

It belongs to the NAPRTase family. In terms of assembly, homodimer.

The protein resides in the nucleus. It localises to the cytoplasm. The protein localises to the secreted. It catalyses the reaction beta-nicotinamide D-ribonucleotide + diphosphate = 5-phospho-alpha-D-ribose 1-diphosphate + nicotinamide + H(+). It functions in the pathway cofactor biosynthesis; NAD(+) biosynthesis; nicotinamide D-ribonucleotide from 5-phospho-alpha-D-ribose 1-diphosphate and nicotinamide: step 1/1. Its function is as follows. Catalyzes the condensation of nicotinamide with 5-phosphoribosyl-1-pyrophosphate to yield nicotinamide mononucleotide, an intermediate in the biosynthesis of NAD. It is the rate limiting component in the mammalian NAD biosynthesis pathway. The secreted form behaves both as a cytokine with immunomodulating properties and an adipokine with anti-diabetic properties, it has no enzymatic activity, partly because of lack of activation by ATP, which has a low level in extracellular space and plasma. Plays a role in the modulation of circadian clock function. Plays a role in the modulation of circadian clock function. NAMPT-dependent oscillatory production of NAD regulates oscillation of clock target gene expression by releasing the core clock component: CLOCK-BMAL1 heterodimer from NAD-dependent SIRT1-mediated suppression. The protein is Nicotinamide phosphoribosyltransferase (NAMPT) of Sus scrofa (Pig).